A 90-amino-acid polypeptide reads, in one-letter code: UPF0213 protein lwe0147 (90 aa).

Residues 5–83 (NEHFFYVLKC…SRKNKDSYLI (79 aa)) enclose the GIY-YIG domain.

Belongs to the UPF0213 family.

This is UPF0213 protein lwe0147 from Listeria welshimeri serovar 6b (strain ATCC 35897 / DSM 20650 / CCUG 15529 / CIP 8149 / NCTC 11857 / SLCC 5334 / V8).